The primary structure comprises 108 residues: Trp operon repressor homolog (108 aa).

The DNA-binding element occupies 59–82 (QRQISQLLGVGVATITRGSNELKS).

The protein belongs to the TrpR family. As to quaternary structure, homodimer.

Its subcellular location is the cytoplasm. This protein is an aporepressor. When complexed with L-tryptophan it binds the operator region of the trp operon and prevents the initiation of transcription. The protein is Trp operon repressor homolog of Aliivibrio fischeri (strain ATCC 700601 / ES114) (Vibrio fischeri).